Here is a 355-residue protein sequence, read N- to C-terminus: Inositol polyphosphate multikinase (355 aa).

Met1 is subject to N-acetylmethionine. Lys31 contributes to the ATP binding site. Residue Ser97 is modified to Phosphoserine. ATP is bound by residues 118 to 120 and Asp131; that span reads ENL. 127–135 provides a ligand contact to substrate; it reads PNILDIKLG. The Ca(2+) site is built by Glu271 and Asn274. Over residues 284–304 the composition is skewed to acidic residues; that stretch reads FIDDDDDDDDNDDDDDDDAEG. The disordered stretch occupies residues 284–317; the sequence is FIDDDDDDDDNDDDDDDDAEGSSEGPKDKKTTGS. Asp325 provides a ligand contact to ATP. Gly334 serves as a coordination point for Ca(2+).

Belongs to the inositol phosphokinase (IPK) family. In terms of assembly, interacts with ARG80 and MCM1. Requires Ca(2+) as cofactor.

It is found in the nucleus. It catalyses the reaction 1D-myo-inositol 1,4,5-trisphosphate + 2 ATP = 1D-myo-inositol 1,3,4,5,6-pentakisphosphate + 2 ADP + 2 H(+). The catalysed reaction is 1D-myo-inositol 1,4,5-trisphosphate + ATP = 1D-myo-inositol 1,4,5,6-tetrakisphosphate + ADP + H(+). It carries out the reaction 1D-myo-inositol 1,4,5-trisphosphate + ATP = 1D-myo-inositol 1,3,4,5-tetrakisphosphate + ADP + H(+). The enzyme catalyses 1D-myo-inositol 1,4,5,6-tetrakisphosphate + ATP = 1D-myo-inositol 1,3,4,5,6-pentakisphosphate + ADP + H(+). It catalyses the reaction a 1,2-diacyl-sn-glycero-3-phospho-(1D-myo-inositol-4,5-bisphosphate) + ATP = a 1,2-diacyl-sn-glycero-3-phospho-(1D-myo-inositol-3,4,5-trisphosphate) + ADP + H(+). Functionally, inositol phosphate kinase with both monophosphoinositol and diphosphoinositol polyphosphate synthase activities. Able to phosphorylate inositol 1,4,5-trisphosphate (Ins(1,4,5)P3) on both the carbon-3 and carbon-6 positions to synthesize inositol 1,3,4,5-tetrakisphosphate (Ins(1,3,4,5)P4) and inositol 1,4,5,6-tetrakisphosphate (Ins(1,4,5,6)P4), and then to subsequently phosphorylate and convert either isomer of InsP4 to inositol 1,3,4,5,6-pentakisphosphate (Ins(1,3,4,5,6)P5). Its predominant in vivo catalytic function is to convert Ins(1,4,5)P3 to Ins(1,4,5,6)P4 to Ins(1,3,4,5,6)P5 via 6- and 3-kinase activities. It can also use Ins(1,3,4,5,6)P5 as a substrate and act as a diphosphoinositol polyphosphate synthase to generate two different isomers of PP-InsP4. Also has a role in transcription regulation. Forms a complex with ARG80, ARG81 and MCM1 (ArgR-MCM1), which coordinates the expression of arginine anabolic and catabolic genes in response to arginine. Recruits ARG80 and MCM21 to stabilize them. Neither the kinase activity nor inositol phosphates are required for the formation of ArgR-MCM1 transcriptional complexes on DNA promoter elements and the control of arginine metabolism. In contrast, only the catalytic activity is required for PHO gene repression by phosphate and for NCR gene activation in response to nitrogen availability, indicating a role for inositol pyrophosphates in these controls. Inositol polyphosphates may be involved in the regulation of chromatin remodeling of transcription. Regulates nuclear mRNA export via inositol phosphate metabolism. Also has lipid kinase activity, transforming the lipid inositol phosphatidylinositol 4,5-bisphosphate (PI(4,5)P2) into phosphatidylinositol 3,4,5-trisphosphate (PI(3,4,5)P3) in the nucleus. Its kinase activity is necessary for the propagation of most [PSI+] prion variants. This chain is Inositol polyphosphate multikinase (ARG82), found in Saccharomyces cerevisiae (strain ATCC 204508 / S288c) (Baker's yeast).